A 248-amino-acid chain; its full sequence is Tyrosine recombinase XerD-like (248 aa).

One can recognise a Core-binding (CB) domain in the interval 1 to 72; the sequence is MKSYIEPFIA…TANQFLYYLY (72 aa). The Tyr recombinase domain maps to 85 to 248; sequence DTMKVMRTEK…PVTLEKYYKS (164 aa). Residues Lys149 and Arg213 contribute to the active site. The O-(3'-phospho-DNA)-tyrosine intermediate role is filled by Tyr245.

This sequence belongs to the 'phage' integrase family. XerD-like subfamily.

Its subcellular location is the cytoplasm. Its function is as follows. Putative tyrosine recombinase. Not involved in the cutting and rejoining of the recombining DNA molecules on dif(SL) site. The chain is Tyrosine recombinase XerD-like from Streptococcus pyogenes serotype M28 (strain MGAS6180).